The chain runs to 377 residues: Cytochrome c peroxidase, mitochondrial (377 aa).

The transit peptide at 1–32 (MSFRAPNLIRSTVGRRAGQTLNLRSQVIRRRF) directs the protein to the mitochondrion. His138 serves as the catalytic Proton acceptor. Position 261 (His261) interacts with heme b. The Tryptophan radical intermediate role is filled by Trp277.

This sequence belongs to the peroxidase family. Cytochrome c peroxidase subfamily. In terms of assembly, forms a one-to-one complex with cytochrome c. Interacts with MID1 (via C-terminus); the interaction may contribute to cellular detoxification of radicals. The cofactor is heme b.

Its subcellular location is the mitochondrion matrix. It is found in the mitochondrion intermembrane space. The catalysed reaction is 2 Fe(II)-[cytochrome c] + H2O2 + 2 H(+) = 2 Fe(III)-[cytochrome c] + 2 H2O. Functionally, destroys radicals which are normally produced within the cells and which are toxic to biological systems. This is Cytochrome c peroxidase, mitochondrial (CCP1) from Cryptococcus neoformans var. grubii serotype A (strain H99 / ATCC 208821 / CBS 10515 / FGSC 9487) (Filobasidiella neoformans var. grubii).